The following is a 1512-amino-acid chain: Lysophospholipase NTE1 (1512 aa).

The Cytoplasmic portion of the chain corresponds to 1-48 (MAAPDAMTSLVKSSVALLSSAHESLPTSLAAMKTAETAPSSTFGILGR). The helical transmembrane segment at 49 to 69 (VILSILSVLPTLLFWVSYTLP) threads the bilayer. At 70–83 (TWLFTLFSMSLTFT) the chain is on the lumenal side. A helical membrane pass occupies residues 84–104 (MNFTTLMLVLVFVVSTISYFV). At 105 to 1512 (RYRYLTMYAR…RTMAPRRASI (1408 aa)) the chain is on the cytoplasmic side. Disordered regions lie at residues 204–230 (NREESDSDEDDGELQGESGGGSAQAHR), 262–362 (RHDE…AHPD), 534–556 (TQMSRGTGRSGRSSFSQPYQHDV), and 740–770 (TEDDLFGPPLQPTATNTSLRNGENSKKKRSR). Positions 208–217 (SDSDEDDGEL) are enriched in acidic residues. Residues 268 to 291 (GPSSSTPMSPQHRPSMTRNSSFNM) are compositionally biased toward polar residues. The span at 343–358 (HSKQRRSPSRSTKPKS) shows a compositional bias: basic residues. Over residues 537 to 549 (SRGTGRSGRSSFS) the composition is skewed to low complexity. Residues 669–793 (LSAS…SNRS) and 830–950 (RLTT…IASR) each bind a nucleoside 3',5'-cyclic phosphate. Positions 751 to 761 (PTATNTSLRNG) are enriched in polar residues. Residues 1209-1373 (LVLGGGGARG…IDNLTVAHMK (165 aa)) enclose the PNPLA domain. The short motif at 1213–1218 (GGGARG) is the GXGXXG element. The GXSXG signature appears at 1240 to 1244 (GTSIG). Catalysis depends on S1242, which acts as the Nucleophile. The Proton acceptor role is filled by D1360. The DGA/G motif lies at 1360–1362 (DGG).

This sequence belongs to the NTE family.

It localises to the endoplasmic reticulum membrane. The catalysed reaction is a 1-acyl-sn-glycero-3-phosphocholine + H2O = sn-glycerol 3-phosphocholine + a fatty acid + H(+). Inhibited by organophosphorus esters. Functionally, intracellular phospholipase B that catalyzes the double deacylation of phosphatidylcholine (PC) to glycerophosphocholine (GroPCho). Plays an important role in membrane lipid homeostasis. Responsible for the rapid PC turnover in response to inositol, elevated temperatures, or when choline is present in the growth medium. This is Lysophospholipase NTE1 (NTE1) from Phaeosphaeria nodorum (strain SN15 / ATCC MYA-4574 / FGSC 10173) (Glume blotch fungus).